Here is a 124-residue protein sequence, read N- to C-terminus: MGVVFAVALGGAIGSALRFLLSKVVQEHFGISFPVGTLFVNLVGAFFIGFFFAYLVDKLAVNPHARALLITGLLGGLTTFSTYSYESFSLLREGETLKFLAYTLGTNVLGIFFTFLGYILGESL.

4 helical membrane passes run 1 to 21, 35 to 55, 68 to 88, and 99 to 119; these read MGVV…RFLL, VGTL…FAYL, LLIT…YESF, and FLAY…LGYI. G75 and T78 together coordinate Na(+).

The protein belongs to the fluoride channel Fluc/FEX (TC 1.A.43) family.

The protein localises to the cell inner membrane. It carries out the reaction fluoride(in) = fluoride(out). With respect to regulation, na(+) is not transported, but it plays an essential structural role and its presence is essential for fluoride channel function. Its function is as follows. Fluoride-specific ion channel. Important for reducing fluoride concentration in the cell, thus reducing its toxicity. This chain is Fluoride-specific ion channel FluC, found in Aquifex aeolicus (strain VF5).